The chain runs to 419 residues: Serine--tRNA ligase (419 aa).

A disordered region spans residues 45–66 (ADSLRAEQKAASKSVGGASPEE). An L-serine-binding site is contributed by 226–228 (TSE). Residues 257 to 259 (RRE) and Val273 contribute to the ATP site. An L-serine-binding site is contributed by Glu280. 344–347 (ELTS) lines the ATP pocket. Thr379 lines the L-serine pocket.

The protein belongs to the class-II aminoacyl-tRNA synthetase family. Type-1 seryl-tRNA synthetase subfamily. In terms of assembly, homodimer. The tRNA molecule binds across the dimer.

The protein localises to the cytoplasm. The catalysed reaction is tRNA(Ser) + L-serine + ATP = L-seryl-tRNA(Ser) + AMP + diphosphate + H(+). The enzyme catalyses tRNA(Sec) + L-serine + ATP = L-seryl-tRNA(Sec) + AMP + diphosphate + H(+). It participates in aminoacyl-tRNA biosynthesis; selenocysteinyl-tRNA(Sec) biosynthesis; L-seryl-tRNA(Sec) from L-serine and tRNA(Sec): step 1/1. In terms of biological role, catalyzes the attachment of serine to tRNA(Ser). Is also able to aminoacylate tRNA(Sec) with serine, to form the misacylated tRNA L-seryl-tRNA(Sec), which will be further converted into selenocysteinyl-tRNA(Sec). The chain is Serine--tRNA ligase from Mycobacterium ulcerans (strain Agy99).